The following is a 469-amino-acid chain: Glutamate--tRNA ligase (469 aa).

A 'HIGH' region motif is present at residues 9–19 (PSPTGYLHVGG). Zn(2+) contacts are provided by cysteine 98, cysteine 100, cysteine 125, and aspartate 127. Positions 237 to 241 (KLSKR) match the 'KMSKS' region motif. Lysine 240 provides a ligand contact to ATP.

The protein belongs to the class-I aminoacyl-tRNA synthetase family. Glutamate--tRNA ligase type 1 subfamily. Monomer. Zn(2+) serves as cofactor.

It is found in the cytoplasm. The enzyme catalyses tRNA(Glu) + L-glutamate + ATP = L-glutamyl-tRNA(Glu) + AMP + diphosphate. Its function is as follows. Catalyzes the attachment of glutamate to tRNA(Glu) in a two-step reaction: glutamate is first activated by ATP to form Glu-AMP and then transferred to the acceptor end of tRNA(Glu). The sequence is that of Glutamate--tRNA ligase from Serratia proteamaculans (strain 568).